Reading from the N-terminus, the 246-residue chain is UDP-N-acetyl-D-mannosaminuronic acid transferase (246 aa).

Belongs to the glycosyltransferase 26 family.

The catalysed reaction is UDP-N-acetyl-alpha-D-mannosaminouronate + N-acetyl-alpha-D-glucosaminyl-di-trans,octa-cis-undecaprenyl diphosphate = beta-D-ManNAcA-(1-&gt;4)-alpha-D-GlcNAc-di-trans,octa-cis-undecaprenyl diphosphate + UDP + H(+). It participates in bacterial outer membrane biogenesis; enterobacterial common antigen biosynthesis. In terms of biological role, catalyzes the synthesis of Und-PP-GlcNAc-ManNAcA (Lipid II), the second lipid-linked intermediate involved in enterobacterial common antigen (ECA) synthesis. The polypeptide is UDP-N-acetyl-D-mannosaminuronic acid transferase (Escherichia coli (strain K12)).